A 496-amino-acid chain; its full sequence is Probable cytosol aminopeptidase (496 aa).

Mn(2+) contacts are provided by K252 and D257. K264 is an active-site residue. Mn(2+)-binding residues include D275, D334, and E336. Residue R338 is part of the active site.

It belongs to the peptidase M17 family. Mn(2+) serves as cofactor.

Its subcellular location is the cytoplasm. The enzyme catalyses Release of an N-terminal amino acid, Xaa-|-Yaa-, in which Xaa is preferably Leu, but may be other amino acids including Pro although not Arg or Lys, and Yaa may be Pro. Amino acid amides and methyl esters are also readily hydrolyzed, but rates on arylamides are exceedingly low.. It carries out the reaction Release of an N-terminal amino acid, preferentially leucine, but not glutamic or aspartic acids.. In terms of biological role, presumably involved in the processing and regular turnover of intracellular proteins. Catalyzes the removal of unsubstituted N-terminal amino acids from various peptides. In Leifsonia xyli subsp. xyli (strain CTCB07), this protein is Probable cytosol aminopeptidase.